Consider the following 575-residue polypeptide: Preterminal protein (575 aa).

The short motif at arginine 309–arginine 318 is the Nuclear localization signal element. Residues threonine 314 to proline 340 are disordered. The segment covering glutamate 328–proline 340 has biased composition (acidic residues). Position 510 is an O-(5'-phospho-DNA)-serine (serine 510).

It belongs to the adenoviridae terminal protein family. In terms of assembly, heterodimer with the polymerase; this heterodimer binds to bp 9 to 18 of the genome. Interacts with host POU2F1; POU2F1 binds to the auxiliary sequences in the inverted terminal repeats and tethers the pTP-POL heterodimer to the origin DNA thereby participating in the assembly of the pre-initiation complex (POL-TP-DBP-NFIA-POU2F1). In terms of processing, preterminal protein is used to replicate viral genome, upon genomic encapsidation it is processed first into iTP and finally into TP by adenovirus protease.

It localises to the host nucleus matrix. Functionally, protein covalently bound to the viral DNA that acts as a primer for viral genomic replication by DNA strand displacement. Assembles on the viral origin of replication in an initiation complex with viral polymerase, DBP, host NFIA and host POU2F1/OCT1. During initiation, the polymerase covalently couples the first dCTP with Ser-580 of pTP. The terminal protein stimulates the template activity over 20 fold compared to protein-free templates. Neo-synthesized viral genomes are linked to two preterminal proteins, one for each 5' end. These new genomes are encapsidated in the nucleus, and during capsid maturation by viral protease, preterminal protein is first cleaved into intermediary (iTP), then into mature TP. May play a role in host nuclear matrix localization of genomic DNA. The sequence is that of Preterminal protein from Fowl adenovirus A serotype 1 (strain CELO / Phelps) (FAdV-1).